The following is a 266-amino-acid chain: Stomatin homolog PH1511 (266 aa).

A helical transmembrane segment spans residues 7-27; sequence FFVTSIILLFILIFLASAIKI. Coiled-coil stretches lie at residues 125–152 and 178–213; these read GQAH…EATD and RQAE…ISEH.

The protein belongs to the band 7/mec-2 family. In terms of assembly, homotrimer. Interacts with PH1510 and is cleaved by PH1510.

Its subcellular location is the membrane. The chain is Stomatin homolog PH1511 from Pyrococcus horikoshii (strain ATCC 700860 / DSM 12428 / JCM 9974 / NBRC 100139 / OT-3).